A 44-amino-acid polypeptide reads, in one-letter code: Cytochrome b559 subunit beta (44 aa).

A helical transmembrane segment spans residues 19 to 35 (WLSVHALGVPSVFFLGA). Residue H23 participates in heme binding.

The protein belongs to the PsbE/PsbF family. Heterodimer of an alpha subunit and a beta subunit. PSII is composed of 1 copy each of membrane proteins PsbA, PsbB, PsbC, PsbD, PsbE, PsbF, PsbH, PsbI, PsbJ, PsbK, PsbL, PsbM, PsbT, PsbX, PsbY, PsbZ, Psb30/Ycf12, peripheral proteins PsbO, CyanoQ (PsbQ), PsbU, PsbV and a large number of cofactors. It forms dimeric complexes. It depends on heme b as a cofactor.

It localises to the cellular thylakoid membrane. This b-type cytochrome is tightly associated with the reaction center of photosystem II (PSII). PSII is a light-driven water:plastoquinone oxidoreductase that uses light energy to abstract electrons from H(2)O, generating O(2) and a proton gradient subsequently used for ATP formation. It consists of a core antenna complex that captures photons, and an electron transfer chain that converts photonic excitation into a charge separation. This is Cytochrome b559 subunit beta from Synechococcus elongatus (strain ATCC 33912 / PCC 7942 / FACHB-805) (Anacystis nidulans R2).